The sequence spans 138 residues: Basic phospholipase A2 PL-Y (138 aa).

The first 16 residues, 1–16 (MRTLWIMAVLLVGVEG), serve as a signal peptide directing secretion. 7 cysteine pairs are disulfide-bonded: Cys42–Cys131, Cys44–Cys60, Cys59–Cys111, Cys65–Cys138, Cys66–Cys104, Cys73–Cys97, and Cys91–Cys102. Ca(2+) contacts are provided by Tyr43, Gly45, and Gly47. His63 is a catalytic residue. Asp64 contacts Ca(2+). Residue Asp105 is part of the active site.

Belongs to the phospholipase A2 family. Group II subfamily. D49 sub-subfamily. Ca(2+) is required as a cofactor. In terms of tissue distribution, expressed by the venom gland.

It is found in the secreted. The catalysed reaction is a 1,2-diacyl-sn-glycero-3-phosphocholine + H2O = a 1-acyl-sn-glycero-3-phosphocholine + a fatty acid + H(+). Functionally, snake venom phospholipase A2 (PLA2) that can cleave arachidonate at the sn-2 position from phospholipides in the micellar state or in bilayer membranes. PLA2 catalyzes the calcium-dependent hydrolysis of the 2-acyl groups in 3-sn-phosphoglycerides. The protein is Basic phospholipase A2 PL-Y of Protobothrops flavoviridis (Habu).